The sequence spans 934 residues: Protein translocase subunit SecA (934 aa).

ATP contacts are provided by residues Gln87, Gly105 to Thr109, and Asp515. Residues Cys918, Cys920, Cys929, and His930 each contribute to the Zn(2+) site.

The protein belongs to the SecA family. Monomer and homodimer. Part of the essential Sec protein translocation apparatus which comprises SecA, SecYEG and auxiliary proteins SecDF-YajC and YidC. Zn(2+) is required as a cofactor.

The protein localises to the cell inner membrane. It localises to the cytoplasm. The catalysed reaction is ATP + H2O + cellular proteinSide 1 = ADP + phosphate + cellular proteinSide 2.. Its function is as follows. Part of the Sec protein translocase complex. Interacts with the SecYEG preprotein conducting channel. Has a central role in coupling the hydrolysis of ATP to the transfer of proteins into and across the cell membrane, serving both as a receptor for the preprotein-SecB complex and as an ATP-driven molecular motor driving the stepwise translocation of polypeptide chains across the membrane. This is Protein translocase subunit SecA from Ralstonia pickettii (strain 12J).